The chain runs to 357 residues: Protein RecA (357 aa).

67–74 (GPESSGKT) is a binding site for ATP. Positions 333–357 (NELTPATAGNSHDEDAFADEGNEEF) are disordered. Positions 348–357 (AFADEGNEEF) are enriched in acidic residues.

Belongs to the RecA family.

The protein resides in the cytoplasm. In terms of biological role, can catalyze the hydrolysis of ATP in the presence of single-stranded DNA, the ATP-dependent uptake of single-stranded DNA by duplex DNA, and the ATP-dependent hybridization of homologous single-stranded DNAs. It interacts with LexA causing its activation and leading to its autocatalytic cleavage. The protein is Protein RecA of Pectobacterium carotovorum subsp. carotovorum (strain PC1).